We begin with the raw amino-acid sequence, 88 residues long: Small ribosomal subunit protein uS15 (88 aa).

The protein belongs to the universal ribosomal protein uS15 family. Part of the 30S ribosomal subunit. Forms a bridge to the 50S subunit in the 70S ribosome, contacting the 23S rRNA.

One of the primary rRNA binding proteins, it binds directly to 16S rRNA where it helps nucleate assembly of the platform of the 30S subunit by binding and bridging several RNA helices of the 16S rRNA. In terms of biological role, forms an intersubunit bridge (bridge B4) with the 23S rRNA of the 50S subunit in the ribosome. The sequence is that of Small ribosomal subunit protein uS15 from Mycoplasma capricolum subsp. capricolum (strain California kid / ATCC 27343 / NCTC 10154).